Here is a 209-residue protein sequence, read N- to C-terminus: A-type ATP synthase subunit D (209 aa).

It belongs to the V-ATPase D subunit family. In terms of assembly, has multiple subunits with at least A(3), B(3), C, D, E, F, H, I and proteolipid K(x).

It localises to the cell membrane. Functionally, component of the A-type ATP synthase that produces ATP from ADP in the presence of a proton gradient across the membrane. In Sulfolobus acidocaldarius (strain ATCC 33909 / DSM 639 / JCM 8929 / NBRC 15157 / NCIMB 11770), this protein is A-type ATP synthase subunit D.